The chain runs to 310 residues: Porphobilinogen deaminase (310 aa).

Cys-242 is modified (S-(dipyrrolylmethanemethyl)cysteine).

The protein belongs to the HMBS family. Monomer. Requires dipyrromethane as cofactor.

It carries out the reaction 4 porphobilinogen + H2O = hydroxymethylbilane + 4 NH4(+). It functions in the pathway porphyrin-containing compound metabolism; protoporphyrin-IX biosynthesis; coproporphyrinogen-III from 5-aminolevulinate: step 2/4. Functionally, tetrapolymerization of the monopyrrole PBG into the hydroxymethylbilane pre-uroporphyrinogen in several discrete steps. The polypeptide is Porphobilinogen deaminase (Shewanella sp. (strain ANA-3)).